Here is a 433-residue protein sequence, read N- to C-terminus: uncharacterized protein (433 aa).

One can recognise a Radical SAM core domain in the interval 104–349; the sequence is ERGRNIIQVR…ELEYKKKGIE (246 aa). [4Fe-4S] cluster is bound by residues Cys-118, Cys-122, and Cys-125. S-adenosyl-L-methionine-binding positions include 171 to 172 and 236 to 238; these read GE and MLS. The 64-residue stretch at 370–433 folds into the TRAM domain; the sequence is PFKVGEVTKV…KDNIIVAELV (64 aa).

Belongs to the radical SAM superfamily. Requires [4Fe-4S] cluster as cofactor.

This is an uncharacterized protein from Methanocaldococcus jannaschii (strain ATCC 43067 / DSM 2661 / JAL-1 / JCM 10045 / NBRC 100440) (Methanococcus jannaschii).